Here is a 352-residue protein sequence, read N- to C-terminus: Protein Wnt-3a (352 aa).

Residues 1–18 (MAPLGYLLVLCSLKQALG) form the signal peptide. Intrachain disulfides connect cysteine 77/cysteine 88, cysteine 128/cysteine 136, cysteine 138/cysteine 155, cysteine 203/cysteine 217, cysteine 205/cysteine 212, cysteine 281/cysteine 312, cysteine 297/cysteine 307, cysteine 311/cysteine 351, cysteine 327/cysteine 342, cysteine 329/cysteine 339, and cysteine 334/cysteine 335. N-linked (GlcNAc...) asparagine glycosylation is present at asparagine 87. Residue serine 209 is the site of O-palmitoleoyl serine; by PORCN attachment. Asparagine 298 carries an N-linked (GlcNAc...) asparagine glycan.

It belongs to the Wnt family. In terms of assembly, forms a soluble 1:1 complex with AFM; this prevents oligomerization and is required for prolonged biological activity. The complex with AFM may represent the physiological form in body fluids. Homooligomer; disulfide-linked, leading to inactivation. Interacts with APCDD1 and WLS. Component of the Wnt-Fzd-LRP5-LRP6 signaling complex that contains a WNT protein, a FZD protein and LRP5 or LRP6. Interacts directly in the complex with LRP6. Interacts with PORCN. Interacts with glypican GPC3. Interacts with PKD1 (via extracellular domain). Interacts with FZD5. Post-translationally, proteolytic processing by TIKI1 and TIKI2 promotes oxidation and formation of large disulfide-bond oligomers, leading to inactivation of WNT3A. In terms of processing, disulfide bonds have critical and distinct roles in secretion and activity. Loss of each conserved cysteine in WNT3A results in high molecular weight oxidized Wnt oligomers, which are formed through inter-Wnt disulfide bonding. Palmitoleoylation by PORCN is required for efficient binding to frizzled receptors. Palmitoleoylation is required for proper trafficking to cell surface, vacuolar acidification is critical to release palmitoleoylated WNT3A from WLS in secretory vesicles. Depalmitoleoylated by NOTUM, leading to inhibit Wnt signaling pathway, possibly by promoting disulfide bond formation and oligomerization. Dorsal portion of the neural tube (developing roof plate), and mesenchyme tissue surrounding the umbilical veins.

The protein resides in the secreted. It is found in the extracellular space. Its subcellular location is the extracellular matrix. Ligand for members of the frizzled family of seven transmembrane receptors. Functions in the canonical Wnt signaling pathway that results in activation of transcription factors of the TCF/LEF family. Required for normal embryonic mesoderm development and formation of caudal somites. Required for normal morphogenesis of the developing neural tube. Mediates self-renewal of the stem cells at the bottom on intestinal crypts (in vitro). This chain is Protein Wnt-3a (Wnt3a), found in Mus musculus (Mouse).